The following is a 261-amino-acid chain: Global transcriptional regulator CodY (261 aa).

The segment at 1-159 (MANLLSKTRR…SSTVVGIQLL (159 aa)) is GAF domain. Positions 207 to 226 (ASVIADRIGITRSVIVNALR) form a DNA-binding region, H-T-H motif.

It belongs to the CodY family.

It is found in the cytoplasm. In terms of biological role, DNA-binding global transcriptional regulator which is involved in the adaptive response to starvation and acts by directly or indirectly controlling the expression of numerous genes in response to nutrient availability. During rapid exponential growth, CodY is highly active and represses genes whose products allow adaptation to nutrient depletion. This chain is Global transcriptional regulator CodY, found in Streptococcus mutans serotype c (strain ATCC 700610 / UA159).